The primary structure comprises 506 residues: Glutamate--tRNA ligase (506 aa).

The 'HIGH' region signature appears at 23–33 (PSPTGTPHVGL). The 'KMSKS' region motif lies at 267-271 (KLSKR). Residue K270 coordinates ATP.

It belongs to the class-I aminoacyl-tRNA synthetase family. Glutamate--tRNA ligase type 1 subfamily. Monomer.

It localises to the cytoplasm. The catalysed reaction is tRNA(Glu) + L-glutamate + ATP = L-glutamyl-tRNA(Glu) + AMP + diphosphate. In terms of biological role, catalyzes the attachment of glutamate to tRNA(Glu) in a two-step reaction: glutamate is first activated by ATP to form Glu-AMP and then transferred to the acceptor end of tRNA(Glu). In Clavibacter sepedonicus (Clavibacter michiganensis subsp. sepedonicus), this protein is Glutamate--tRNA ligase.